The primary structure comprises 92 residues: MPKLEMMLLVLLILPLSYFSAAGGQVVQGDWRGDGLARYLQRGDRDAQGCQVVTPGSKWGRCCLNRVCGPMCCPASHCYCIYHRGRGHGCSC.

The signal sequence occupies residues 1 to 24 (MPKLEMMLLVLLILPLSYFSAAGG). Positions 25–45 (QVVQGDWRGDGLARYLQRGDR) are excised as a propeptide. Pro55 is subject to 4-hydroxyproline. 4 cysteine pairs are disulfide-bonded: Cys63–Cys72, Cys68–Cys80, Cys73–Cys90, and Cys78–Cys92.

Belongs to the conotoxin D superfamily. As to quaternary structure, hetero-, homo- or pseudo-homodimer (identical sequence, different post-translational modifications). As to expression, expressed by the venom duct.

The protein localises to the secreted. Alpha-conotoxins act on postsynaptic membranes, they bind to the nicotinic acetylcholine receptors (nAChR) and thus inhibit them. Through its two C-terminal domains, this homodimeric protein would bind to two nAChR allosteric sites, located outside the nAChR C-loop of the principal binding face and at the adjacent binding interface in a clockwise direction. This toxin specifically blocks mammalian neuronal nAChR of the alpha-7/CHRNA7, alpha-3-beta-2/CHRNA3-CHRNB2 and alpha-4-beta-2/CHRNA4-CHRNB2 subtypes. The sequence is that of Alpha-conotoxin-like Mi20.3 from Conus miles (Soldier cone).